We begin with the raw amino-acid sequence, 616 residues long: Zinc metalloproteinase nas-36 (616 aa).

The N-terminal stretch at 1–21 (MRRFCRLLFLNSLLSISICKA) is a signal peptide. A propeptide spanning residues 22–125 (QNPAHLVADE…SKDKTKRLRR (104 aa)) is cleaved from the precursor. The region spanning 126 to 321 (SFVSDKTATW…VATINTAYCK (196 aa)) is the Peptidase M12A domain. 9 cysteine pairs are disulfide-bonded: cysteine 168-cysteine 320, cysteine 191-cysteine 210, cysteine 324-cysteine 345, cysteine 347-cysteine 356, cysteine 367-cysteine 396, cysteine 424-cysteine 444, cysteine 518-cysteine 549, cysteine 522-cysteine 554, and cysteine 534-cysteine 539. Asparagine 173 carries an N-linked (GlcNAc...) asparagine glycan. Histidine 218 contacts Zn(2+). Residue glutamate 219 is part of the active site. 2 residues coordinate Zn(2+): histidine 222 and histidine 228. In terms of domain architecture, EGF-like spans 316-357 (NTAYCKEECKSEKTECEYGGYMRPSKCSECLCPDGLGGEKCE). The CUB domain maps to 367-481 (CGGILELSDE…IGFKIQVRST (115 aa)). The TSP type-1 domain occupies 506–555 (PNVWADWGEWSMCSRTCGGCGIRSRVRSCRSKKCEGRRQEFGTCNLKACP).

It depends on Zn(2+) as a cofactor.

The protein localises to the secreted. In terms of biological role, mtalloprotease. Involved in molting, a process during larval stages in which a new cuticle is formed and the old cuticle is shed. This Caenorhabditis briggsae protein is Zinc metalloproteinase nas-36.